The chain runs to 444 residues: MRRFFGTDGIRGLTNKVPMTAEVAMRVGMAAGAHFLRGDHKHRVVIGKDTRLSGYMLENALVAGFTSVGMDVVQVGPMPTPAIAMLTRSMRADLGVMISASHNPYQDNGIKLFGPDGYKLSDADEAAIERLLVEEPRLADATHIGRAKRIDDARGRYIHAVKQSLPQMVRLDGLRIVLDCANGAAYNSAPTVFWELGADVVAIGVEPNGTNINDKCGSTAPALLQETVVASGADIGIALDGDADRLIVVDEKGSIIDGDQIMGLIGASWARQGRLKGGGVVATVMSNLGLERFLEGQGLRLERTKVGDRHVLERMKEGGFNVGGEQSGHMILSDHATTGDGTLAALQLLAELVAAERPASELLHQFDPVPQLLKNVRFAGGKPLEDKQVLAAIAEGEAALNGRGRLVIRPSGTEPLIRVMAEGDDAGEVERVVDMICDAVRAAV.

Ser101 (phosphoserine intermediate) is an active-site residue. Residues Ser101, Asp240, Asp242, and Asp244 each contribute to the Mg(2+) site. At Ser101 the chain carries Phosphoserine.

It belongs to the phosphohexose mutase family. Mg(2+) serves as cofactor. Post-translationally, activated by phosphorylation.

It catalyses the reaction alpha-D-glucosamine 1-phosphate = D-glucosamine 6-phosphate. Catalyzes the conversion of glucosamine-6-phosphate to glucosamine-1-phosphate. In Sphingopyxis alaskensis (strain DSM 13593 / LMG 18877 / RB2256) (Sphingomonas alaskensis), this protein is Phosphoglucosamine mutase.